Reading from the N-terminus, the 140-residue chain is MQYILGIDFGLKRIGTALVNTIDRFPSPFRVFAVQNNLQQAVNTLFKDLKQAGYELVQIVIGFPHFHYQSSIQVSIHKFVELIKTRFNVPVTLIDESGTTSEVKANLQELGLKNRTFKKAKDTLAATLILERFLNQQKPN.

The protein belongs to the YqgF nuclease family.

The protein localises to the cytoplasm. Its function is as follows. Could be a nuclease involved in processing of the 5'-end of pre-16S rRNA. The protein is Putative pre-16S rRNA nuclease of Mycoplasma pneumoniae (strain ATCC 29342 / M129 / Subtype 1) (Mycoplasmoides pneumoniae).